Here is a 345-residue protein sequence, read N- to C-terminus: Ryncolin-1 (345 aa).

Residues 1–19 (MKPWAAFHLIFLVASSLEG) form the signal peptide. The tract at residues 48–118 (ILQSQPGIPG…DKGDKGEDCN (71 aa)) is disordered. The region spanning 57-114 (GIPGVPGTNGSEGLKGDPGPQGPPGIRGPDGIRGEAGPKGDKGDQGDKGDKGDKGDKG) is the Collagen-like domain. Over residues 86–116 (DGIRGEAGPKGDKGDQGDKGDKGDKGDKGED) the composition is skewed to basic and acidic residues. One can recognise a Fibrinogen C-terminal domain in the interval 121 to 339 (GCLPTEVRNC…YADMKIRPQQ (219 aa)). Intrachain disulfides connect Cys130–Cys158 and Cys282–Cys295.

The protein belongs to the ficolin lectin family. Veficolin subfamily. Post-translationally, hydroxylated, possibly at Pro-80. As to expression, expressed by the venom duct.

The protein localises to the secreted. Its function is as follows. Initiates complement activation and/or interferes in platelet aggregation and/or blood coagulation. This is Ryncolin-1 from Cerberus rynchops (Dog-faced water snake).